Reading from the N-terminus, the 447-residue chain is MATTFLQTSSTFGSGSTRGGSLRVGGGSFGGGSLYGGGGSRSISASSARFVSSGAGVGFGGGMSCGFGGGFGGGFGGGFGDFGGGDGGLLSGNEKVTMQNLNDRLASYLDKVRALEEANTELEVKIRDWYQKQSPASPDRDYSHYFKTMEEIRDKILAATIDNSRVILEIDNARLAADDFRLKYENELALRQGVEADINGLRRVLDELTLARTDLEMQIEQLNEELAYLKKNHEEEMKEFSSQLAGQVNVEMDAAPGVDLTRMLAEMREQYEAIAEKNRRDVEAWFFSKTEELNKEVASNTEMIQTSKTEITDLRRTLQGLEIELQSQLSMKAGLENSLAEVECRYATQLQQIQGLITGLETQLSELRCEMEAQNQEYNMLLDIKTRLEQEISTYRNLLEGQDAKMAAIGVREASLRGGSSGGGSNFHISVEESVDGKVVSSRKRES.

The interval 1-93 (MATTFLQTSS…GGDGGLLSGN (93 aa)) is head. Phosphoserine occurs at positions 16, 28, 33, and 47. A coil 1A region spans residues 94 to 129 (EKVTMQNLNDRLASYLDKVRALEEANTELEVKIRDW). An IF rod domain is found at 94-406 (EKVTMQNLND…NLLEGQDAKM (313 aa)). Threonine 120 carries the phosphothreonine modification. The linker 1 stretch occupies residues 130–148 (YQKQSPASPDRDYSHYFKT). The tract at residues 149–240 (MEEIRDKILA…KNHEEEMKEF (92 aa)) is coil 1B. Positions 241–260 (SSQLAGQVNVEMDAAPGVDL) are linker 12. The segment at 261–402 (TRMLAEMREQ…STYRNLLEGQ (142 aa)) is coil 2. Residue lysine 289 forms a Glycyl lysine isopeptide (Lys-Gly) (interchain with G-Cter in SUMO2) linkage. Phosphothreonine occurs at positions 290 and 312. The interval 403–447 (DAKMAAIGVREASLRGGSSGGGSNFHISVEESVDGKVVSSRKRES) is tail. Lysine 438 participates in a covalent cross-link: Glycyl lysine isopeptide (Lys-Gly) (interchain with G-Cter in SUMO1); alternate. Lysine 438 participates in a covalent cross-link: Glycyl lysine isopeptide (Lys-Gly) (interchain with G-Cter in SUMO2); alternate.

It belongs to the intermediate filament family. In terms of assembly, heterotetramer of two type I and two type II keratins. Forms a heterodimer with KRT14. Interacts with NOD2.

This chain is Keratin, type I cytoskeletal 15, found in Rattus norvegicus (Rat).